Here is a 152-residue protein sequence, read N- to C-terminus: Protein Smg homolog (152 aa).

It belongs to the Smg family.

In Nitrosomonas eutropha (strain DSM 101675 / C91 / Nm57), this protein is Protein Smg homolog.